The chain runs to 101 residues: Small ribosomal subunit protein uS14A (101 aa).

The tract at residues 31–74 (IRKPSTPEADRAAAQAALQRLPRDASPVRLRNRDAADGRPRGHL) is disordered. Over residues 61 to 70 (RNRDAADGRP) the composition is skewed to basic and acidic residues.

Belongs to the universal ribosomal protein uS14 family. In terms of assembly, part of the 30S ribosomal subunit. Contacts proteins S3 and S10.

Functionally, binds 16S rRNA, required for the assembly of 30S particles and may also be responsible for determining the conformation of the 16S rRNA at the A site. In Nocardia farcinica (strain IFM 10152), this protein is Small ribosomal subunit protein uS14A.